The following is a 356-amino-acid chain: S-adenosylmethionine:tRNA ribosyltransferase-isomerase (356 aa).

This sequence belongs to the QueA family. As to quaternary structure, monomer.

The protein localises to the cytoplasm. The catalysed reaction is 7-aminomethyl-7-carbaguanosine(34) in tRNA + S-adenosyl-L-methionine = epoxyqueuosine(34) in tRNA + adenine + L-methionine + 2 H(+). The protein operates within tRNA modification; tRNA-queuosine biosynthesis. Transfers and isomerizes the ribose moiety from AdoMet to the 7-aminomethyl group of 7-deazaguanine (preQ1-tRNA) to give epoxyqueuosine (oQ-tRNA). The protein is S-adenosylmethionine:tRNA ribosyltransferase-isomerase of Serratia proteamaculans (strain 568).